Reading from the N-terminus, the 449-residue chain is MVLSRLDFPSDFIFGSGTSASQVEGAALEDGKTSTAFEGFLTRMSGNDLSKGVEGYYKYKEDVQLMVQTGLDAYRFSISWSRLIPGGKGPVNPKGLQYYNNFIDELIKNGIQPHVTLLHFDIPDTLMTAYNGLKGQEFVEDFTAFADVCFKEFGDRVLYWTTVNEANNFASLTLDEGNFMPSTEPYIRGHNIILAHASAVKLYREKYKKTQNGFIGLNLYASWYFPETDDEQDSIAAQRAIDFTIGWIMQPLIYGEYPETLKKQVGERLPTFTKEESTFVKNSFDFIGVNCYVGTAVKDDPDSCNSKNKTIITDMSAKLSPKGELGGAYMKGLLEYFKRDYGNPPIYIQENGYWTPRELGVNDASRIEYHTASLASMHDAMKNGANVKGYFQWSFLDLLEVFKYSYGLYHVDLEDPTRERRPKASANWYAEFLKGCATSNGNAKVETPL.

Residues Gln-22, His-119, 164 to 165 (NE), Tyr-292, Glu-350, Trp-393, and Tyr-406 each bind a beta-D-glucoside. Glu-165 functions as the Proton donor in the catalytic mechanism. The active-site Nucleophile is the Glu-350.

The protein belongs to the glycosyl hydrolase 1 family. Mainly expressed in flowers, flower buds and young leaves, and, to a lesser extent, in old leaves, stems and roots.

The protein resides in the cytoplasm. It participates in secondary metabolite biosynthesis; terpenoid biosynthesis. Component of the oleanane-type triterpene saponins (e.g. saponarioside A and saponarioside B) biosynthetic pathway, leading to the production of natural products with detergent properties used as traditional sources of soap. Beta-glycosidase that catalyzes the transfer of glucose moiety to QA-triFRXX to produce QA-triF(Q)RXX via the elongation of the C-28 sugar chain with a D-quinovose. This chain is Glycosyl hydrolase-like protein 1, found in Saponaria officinalis (Common soapwort).